Consider the following 255-residue polypeptide: Sec-independent protein translocase protein TatC (255 aa).

The next 7 helical transmembrane spans lie at 28 to 48 (VAAV…IYAL), 56 to 76 (YLPE…LAPF), 80 to 100 (LMIS…GFIA), 121 to 141 (LFYA…FGFF), 165 to 185 (LFFA…LIWV), 195 to 212 (NSRP…MVLT), and 216 to 236 (VFSQ…GVFF).

The protein belongs to the TatC family. In terms of assembly, the Tat system comprises two distinct complexes: a TatABC complex, containing multiple copies of TatA, TatB and TatC subunits, and a separate TatA complex, containing only TatA subunits. Substrates initially bind to the TatABC complex, which probably triggers association of the separate TatA complex to form the active translocon.

It localises to the cell membrane. Its function is as follows. Part of the twin-arginine translocation (Tat) system that transports large folded proteins containing a characteristic twin-arginine motif in their signal peptide across membranes. Together with TatB, TatC is part of a receptor directly interacting with Tat signal peptides. This is Sec-independent protein translocase protein TatC from Azotobacter chroococcum mcd 1.